Consider the following 218-residue polypeptide: Protein-L-isoaspartate O-methyltransferase (218 aa).

The active site involves serine 52.

Belongs to the methyltransferase superfamily. L-isoaspartyl/D-aspartyl protein methyltransferase family.

It localises to the cytoplasm. It catalyses the reaction [protein]-L-isoaspartate + S-adenosyl-L-methionine = [protein]-L-isoaspartate alpha-methyl ester + S-adenosyl-L-homocysteine. In terms of biological role, catalyzes the methyl esterification of L-isoaspartyl residues in peptides and proteins that result from spontaneous decomposition of normal L-aspartyl and L-asparaginyl residues. It plays a role in the repair and/or degradation of damaged proteins. The polypeptide is Protein-L-isoaspartate O-methyltransferase (Rhodopseudomonas palustris (strain ATCC BAA-98 / CGA009)).